The sequence spans 413 residues: Probable N-acetyltransferase HLS1-like (413 aa).

An N-acetyltransferase domain is found at 5-187 (VEVREYDPSK…VNPVYAHRVN (183 aa)).

It belongs to the acetyltransferase family.

The chain is Probable N-acetyltransferase HLS1-like from Arabidopsis thaliana (Mouse-ear cress).